A 153-amino-acid chain; its full sequence is ATP synthase subunit b' (153 aa).

The helical transmembrane segment at 23–40 (LMAIQVVALTYILNSLFF) threads the bilayer.

This sequence belongs to the ATPase B chain family. In terms of assembly, F-type ATPases have 2 components, F(1) - the catalytic core - and F(0) - the membrane proton channel. F(1) has five subunits: alpha(3), beta(3), gamma(1), delta(1), epsilon(1). F(0) has four main subunits: a(1), b(1), b'(1) and c(10-14). The alpha and beta chains form an alternating ring which encloses part of the gamma chain. F(1) is attached to F(0) by a central stalk formed by the gamma and epsilon chains, while a peripheral stalk is formed by the delta, b and b' chains.

It localises to the cellular thylakoid membrane. Its function is as follows. F(1)F(0) ATP synthase produces ATP from ADP in the presence of a proton or sodium gradient. F-type ATPases consist of two structural domains, F(1) containing the extramembraneous catalytic core and F(0) containing the membrane proton channel, linked together by a central stalk and a peripheral stalk. During catalysis, ATP synthesis in the catalytic domain of F(1) is coupled via a rotary mechanism of the central stalk subunits to proton translocation. Component of the F(0) channel, it forms part of the peripheral stalk, linking F(1) to F(0). The b'-subunit is a diverged and duplicated form of b found in plants and photosynthetic bacteria. This chain is ATP synthase subunit b', found in Prochlorococcus marinus (strain MIT 9515).